We begin with the raw amino-acid sequence, 198 residues long: uncharacterized protein (198 aa).

It localises to the cytoplasm. This is an uncharacterized protein from Saccharomyces cerevisiae (strain ATCC 204508 / S288c) (Baker's yeast).